A 244-amino-acid polypeptide reads, in one-letter code: Sugar fermentation stimulation protein homolog (244 aa).

This sequence belongs to the SfsA family.

The chain is Sugar fermentation stimulation protein homolog from Dinoroseobacter shibae (strain DSM 16493 / NCIMB 14021 / DFL 12).